We begin with the raw amino-acid sequence, 280 residues long: HCLS1-associated protein X-1 (280 aa).

Ser-2 carries the post-translational modification N-acetylserine. The required for localization in mitochondria stretch occupies residues 2–45 (SVFDLFRGFFGFPGPRSHRDPFFGGMTRDDDDDDDDDDEAEEDR). Disordered regions lie at residues 12–70 (GFPG…SFSP) and 100–263 (TLPS…SALD). The segment covering 30 to 43 (DDDDDDDDDDEAEE) has biased composition (acidic residues). The interval 115–280 (TPGERLREGQ…LLLGRWFRSR (166 aa)) is involved in HCLS1 binding. Composition is skewed to basic and acidic residues over residues 116–125 (PGERLREGQT) and 134–154 (PDSHQPRIFEGVLESHAKPES). The interval 176–207 (VSPHSRAKEDKDLDSQVSQEGLGPLLQPQPKS) is involved in CASP9 binding. An involved in GNA13 binding region spans residues 177-248 (SPHSRAKEDK…TTVTHQEAHD (72 aa)). A required for localization in sarcoplasmic reticulum region spans residues 184–280 (EDKDLDSQVS…LLLGRWFRSR (97 aa)). The tract at residues 185 to 280 (DKDLDSQVSQ…LLLGRWFRSR (96 aa)) is involved in PKD2 binding. Phosphoserine occurs at positions 190 and 193. Residues 204–226 (QPKSYFKSISVTKITKPDGTVEE) form an involved in PLN binding region. The interval 204 to 246 (QPKSYFKSISVTKITKPDGTVEERRTVVDSEGRRETTVTHQEA) is involved in ATP2A2 binding. The segment at 211 to 280 (SISVTKITKP…LLLGRWFRSR (70 aa)) is mediates interaction with UCP3. Basic and acidic residues predominate over residues 218–256 (TKPDGTVEERRTVVDSEGRRETTVTHQEAHDSSRSDPDS). The required for ITGB6 binding stretch occupies residues 271 to 280 (LLLGRWFRSR).

The protein belongs to the HAX1 family. As to quaternary structure, interacts with ABCB1, ABCB4 and ABCB11. Directly associates with HCLS1/HS1, through binding to its N-terminal region. Interacts with CTTN. Interacts with PKD2. Interacts with GNA13. Interacts with CASP9. Interacts with ITGB6. Interacts with PLN and ATP2A2; these interactions are inhibited by calcium. Interacts with GRB7. Interacts (via C-terminus) with XIAP/BIRC4 (via BIR 2 domain and BIR 3 domain) and this interaction blocks ubiquitination of XIAP/BIRC4. Interacts with TPC2. Interacts with KCNC3. Interacts with XPO1. Interacts with RNF217. Interacts with UCP3; the interaction is direct and calcium-dependent. Interacts with MAPRE2; this interaction regulates cell migration in keratinocytes. As to expression, ubiquitous, with highest levels in kidney and liver (at protein level).

Its subcellular location is the mitochondrion matrix. The protein resides in the endoplasmic reticulum. It localises to the nucleus membrane. The protein localises to the cytoplasmic vesicle. It is found in the cytoplasm. Its subcellular location is the cell cortex. The protein resides in the cell membrane. It localises to the sarcoplasmic reticulum. The protein localises to the P-body. It is found in the nucleus. In terms of biological role, recruits the Arp2/3 complex to the cell cortex and regulates reorganization of the cortical actin cytoskeleton via its interaction with KCNC3 and the Arp2/3 complex. Slows down the rate of inactivation of KCNC3 channels. Promotes GNA13-mediated cell migration. Involved in the clathrin-mediated endocytosis pathway. May be involved in internalization of ABC transporters such as ABCB11. May inhibit CASP9 and CASP3. Promotes cell survival. May regulate intracellular calcium pools. The protein is HCLS1-associated protein X-1 (Hax1) of Mus musculus (Mouse).